The primary structure comprises 647 residues: Protein INVOLVED IN DE NOVO 2 (647 aa).

Disordered regions lie at residues 1-20 (MGSTVILSSDDEDSDISESE) and 101-123 (SASEAEPSSKRQKNGNPIQDCDH). A compositionally biased stretch (acidic residues) spans 9–20 (SDDEDSDISESE). Residues 253–508 (IAELTEEEAR…NIMKEWNTNI (256 aa)) are a coiled coil.

In terms of assembly, interacts with FMD1/IDNL1. Forms a complex with FMD1/IDNL1 and FMD2/INDL2. Can form homodimers. Interacts with MORC6.

In terms of biological role, forms a complex with FDM1/IDNL1 and FDM2/IDNL2 that is required for RNA-directed DNA methylation (RdDM) and that functions at a downstream step of the RdDM pathway and downstream of small interfering RNA (siRNA) formation. Required for de novo DNA methylation, siRNA accumulation and siRNA-mediated maintenance methylation. Required for several post-transcriptional gene silencing pathways. Binds double-stranded RNAs (dsRNAs) with 5'-overhangs through its XS domain. Binds long non-coding RNA (lncRNA) in an AGO4-dependent manner and associates with DRM2, resulting in DNA methylation of RdDM target loci. Mediates the silencing of a subset of MORC6 target loci. The protein is Protein INVOLVED IN DE NOVO 2 of Arabidopsis thaliana (Mouse-ear cress).